The following is a 369-amino-acid chain: Beta-1,4-galactosyltransferase 2 (369 aa).

The Cytoplasmic portion of the chain corresponds to 1–15 (MSRLLGGTLERVCKA). The chain crosses the membrane as a helical; Signal-anchor for type II membrane protein span at residues 16-36 (VLLLCLLHFLVAVILYFDVYA). Topologically, residues 37-369 (QHLAFFSRFS…GQPMSWLTQG (333 aa)) are lumenal. The span at 58–73 (ASSSTNCSRPNATAAS) shows a compositional bias: polar residues. The disordered stretch occupies residues 58 to 90 (ASSSTNCSRPNATAASSGLPEVPSARPGPTAPV). N-linked (GlcNAc...) asparagine glycosylation is found at N63 and N68. Residues C94 and C136 are joined by a disulfide bond. UDP-alpha-D-galactose contacts are provided by residues 147-151 (PFRHR), 186-188 (FNR), 214-215 (VD), and W275. C208 and C227 form a disulfide bridge. Residue D215 participates in Mn(2+) binding. Residue 277 to 280 (GEDD) participates in N-acetyl-D-glucosamine binding. Residue H308 coordinates Mn(2+). 308–310 (HDR) provides a ligand contact to UDP-alpha-D-galactose. Residue R320 participates in N-acetyl-D-glucosamine binding. N-linked (GlcNAc...) asparagine glycosylation is present at N354.

It belongs to the glycosyltransferase 7 family. Mn(2+) serves as cofactor.

Its subcellular location is the golgi apparatus. The protein resides in the golgi stack membrane. The catalysed reaction is D-glucose + UDP-alpha-D-galactose = lactose + UDP + H(+). It carries out the reaction an N-acetyl-beta-D-glucosaminyl derivative + UDP-alpha-D-galactose = a beta-D-galactosyl-(1-&gt;4)-N-acetyl-beta-D-glucosaminyl derivative + UDP + H(+). It catalyses the reaction N-acetyl-D-glucosamine + UDP-alpha-D-galactose = beta-D-galactosyl-(1-&gt;4)-N-acetyl-D-glucosamine + UDP + H(+). Its pathway is protein modification; protein glycosylation. Responsible for the synthesis of complex-type N-linked oligosaccharides in many glycoproteins as well as the carbohydrate moieties of glycolipids. Can produce lactose. The chain is Beta-1,4-galactosyltransferase 2 from Mus musculus (Mouse).